Consider the following 499-residue polypeptide: Laccase (499 aa).

Plastocyanin-like domains are found at residues 2–127 (VGPV…FVVY) and 139–281 (VDND…ILRY). Residues N51 and N54 are each glycosylated (N-linked (GlcNAc...) asparagine). H64, H66, H109, and H111 together coordinate Cu cation. 2 disulfides stabilise this stretch: C85–C488 and C117–C205. Y196 is modified (3'-nitrotyrosine). N-linked (GlcNAc...) asparagine glycans are attached at residues N208, N217, N292, and N333. The 123-residue stretch at 348–470 (SVPVLLQILS…GGFAVVQAED (123 aa)) folds into the Plastocyanin-like 3 domain. Y372 carries the 3'-nitrotyrosine modification. N-linked (GlcNAc...) asparagine glycosylation is present at N377. Cu cation is bound by residues H395, H398, and H400. 2 N-linked (GlcNAc...) asparagine glycosylation sites follow: N416 and N436. H452, C453, H454, and H458 together coordinate Cu cation.

The protein belongs to the multicopper oxidase family. Cu cation serves as cofactor.

It is found in the secreted. The catalysed reaction is 4 hydroquinone + O2 = 4 benzosemiquinone + 2 H2O. In terms of biological role, lignin degradation and detoxification of lignin-derived products. This chain is Laccase, found in Trametes maxima (White-rot fungus).